Consider the following 331-residue polypeptide: MNIYRRYGWELALAALLVLEIGLFGLSNSRMLDINVLLFSTSDFICIGIVALPLTMVIVSGGIDISFGSTIGLCSIFLGVMFQAGVPMSIAIPLTLLVGALCGLINAGLILYTGVNPLVITLGTMYLFGGSALLLSGISGATGYEGIGGFPTAFTDFANQTLLGLPVPLVIFMVCVLLFWLLMHRTHSGRNVFLIGQNSRVARYSALPVARTLCLLYALTGMASAIAAVLLVSYFGSARSDLGASFLMPAITAVVLGGANIYGGSGSILGTALAVLLVGYLQQGLQMIGTPNQISSALSGALLILVVVGRSISLHRHLIYEWLQRRRNTVV.

The next 10 membrane-spanning stretches (helical) occupy residues 7–27, 45–65, 67–87, 90–110, 118–138, 162–182, 212–232, 240–260, 261–281, and 288–308; these read YGWE…FGLS, ICIG…GIDI, FGST…AGVP, IAIP…AGLI, LVIT…LSGI, LLGL…FWLL, TLCL…VLLV, SDLG…GGAN, IYGG…VGYL, and IGTP…LVVV.

Belongs to the binding-protein-dependent transport system permease family. AraH/RbsC subfamily. The complex is composed of two ATP-binding proteins (LsrA), two transmembrane proteins (LsrC and LsrD) and a solute-binding protein (LsrB).

Its subcellular location is the cell inner membrane. Its function is as follows. Part of the ABC transporter complex LsrABCD involved in autoinducer 2 (AI-2) import. Probably responsible for the translocation of the substrate across the membrane. The chain is Autoinducer 2 import system permease protein LsrD (lsrD) from Yersinia enterocolitica serotype O:8 / biotype 1B (strain NCTC 13174 / 8081).